The sequence spans 354 residues: Probable butyrate kinase 2 (354 aa).

It belongs to the acetokinase family.

The protein localises to the cytoplasm. The enzyme catalyses butanoate + ATP = butanoyl phosphate + ADP. The sequence is that of Probable butyrate kinase 2 from Caldanaerobacter subterraneus subsp. tengcongensis (strain DSM 15242 / JCM 11007 / NBRC 100824 / MB4) (Thermoanaerobacter tengcongensis).